Consider the following 21-residue polypeptide: Glucose-1-phosphate adenylyltransferase large subunit (21 aa).

The disordered stretch occupies residues 1 to 21; it reads SVTADNASETKVREIGQEKSS. Residues 8 to 21 show a composition bias toward basic and acidic residues; that stretch reads SETKVREIGQEKSS.

It belongs to the bacterial/plant glucose-1-phosphate adenylyltransferase family. Heterotetramer.

It localises to the plastid. The protein resides in the chloroplast. Its subcellular location is the amyloplast. The enzyme catalyses alpha-D-glucose 1-phosphate + ATP + H(+) = ADP-alpha-D-glucose + diphosphate. It participates in glycan biosynthesis; starch biosynthesis. Its activity is regulated as follows. Activated by 3'phosphoglycerate, inhibited by orthophosphate. Allosteric regulation. Functionally, this protein plays a role in synthesis of starch. It catalyzes the synthesis of the activated glycosyl donor, ADP-glucose from Glc-1-P and ATP. This chain is Glucose-1-phosphate adenylyltransferase large subunit, found in Spinacia oleracea (Spinach).